Here is a 71-residue protein sequence, read N- to C-terminus: Small ribosomal subunit protein bS21 (71 aa).

The disordered stretch occupies residues 43-71 (TERKRAKASAVKRHAKKLARENARRTRLY). The segment covering 46-59 (KRAKASAVKRHAKK) has biased composition (basic residues). A compositionally biased stretch (basic and acidic residues) spans 60–71 (LARENARRTRLY).

It belongs to the bacterial ribosomal protein bS21 family.

The protein is Small ribosomal subunit protein bS21 of Edwardsiella ictaluri (strain 93-146).